Reading from the N-terminus, the 87-residue chain is Small ribosomal subunit protein bS20 (87 aa).

This sequence belongs to the bacterial ribosomal protein bS20 family.

Binds directly to 16S ribosomal RNA. In Lachnoclostridium phytofermentans (strain ATCC 700394 / DSM 18823 / ISDg) (Clostridium phytofermentans), this protein is Small ribosomal subunit protein bS20.